The following is a 342-amino-acid chain: UDP-3-O-acylglucosamine N-acyltransferase (342 aa).

His-242 functions as the Proton acceptor in the catalytic mechanism.

Belongs to the transferase hexapeptide repeat family. LpxD subfamily. In terms of assembly, homotrimer.

The catalysed reaction is a UDP-3-O-[(3R)-3-hydroxyacyl]-alpha-D-glucosamine + a (3R)-hydroxyacyl-[ACP] = a UDP-2-N,3-O-bis[(3R)-3-hydroxyacyl]-alpha-D-glucosamine + holo-[ACP] + H(+). The protein operates within bacterial outer membrane biogenesis; LPS lipid A biosynthesis. In terms of biological role, catalyzes the N-acylation of UDP-3-O-acylglucosamine using 3-hydroxyacyl-ACP as the acyl donor. Is involved in the biosynthesis of lipid A, a phosphorylated glycolipid that anchors the lipopolysaccharide to the outer membrane of the cell. This chain is UDP-3-O-acylglucosamine N-acyltransferase, found in Leptothrix cholodnii (strain ATCC 51168 / LMG 8142 / SP-6) (Leptothrix discophora (strain SP-6)).